A 230-amino-acid polypeptide reads, in one-letter code: Ureidoacrylate amidohydrolase RutB (230 aa).

The Proton acceptor role is filled by Asp-24. Lys-133 is a catalytic residue. Catalysis depends on Cys-166, which acts as the Nucleophile.

It belongs to the isochorismatase family. RutB subfamily.

It catalyses the reaction (Z)-3-ureidoacrylate + H2O + H(+) = (Z)-3-aminoacrylate + NH4(+) + CO2. It carries out the reaction (Z)-3-ureidoacrylate + H2O = (Z)-3-aminoacrylate + carbamate + H(+). The catalysed reaction is (Z)-2-methylureidoacrylate + H2O + H(+) = (Z)-2-methylaminoacrylate + NH4(+) + CO2. Its function is as follows. Hydrolyzes ureidoacrylate to form aminoacrylate and carbamate. The carbamate hydrolyzes spontaneously, thereby releasing one of the nitrogen atoms of the pyrimidine ring as ammonia and one of its carbon atoms as CO2. This chain is Ureidoacrylate amidohydrolase RutB, found in Escherichia coli O81 (strain ED1a).